A 498-amino-acid chain; its full sequence is Protein DETOXIFICATION 30 (498 aa).

12 consecutive transmembrane segments (helical) span residues 64–86 (YSLG…AAVS), 91–111 (VIAG…ETLC), 136–156 (VTAV…AFIG), 161–181 (ISSA…AYAV), 197–217 (VMAA…WFVI), 227–247 (LAVV…VYIF), 277–297 (AVML…AGYL), 302–322 (ISVA…MIAI), 349–369 (LVAV…LLIF), 393–413 (ILAV…VAVG), 419–439 (VVAY…GLLL), and 447–467 (VMGI…VLTW).

This sequence belongs to the multi antimicrobial extrusion (MATE) (TC 2.A.66.1) family.

The protein localises to the membrane. This chain is Protein DETOXIFICATION 30, found in Arabidopsis thaliana (Mouse-ear cress).